Reading from the N-terminus, the 1033-residue chain is PDZ domain-containing protein 7 (1033 aa).

2 consecutive PDZ domains span residues 86 to 168 (SVRV…RMGR) and 210 to 293 (IVHL…ETGR). The segment covering 323–344 (ESSSSVSSCASSAPYSSGSLPS) has biased composition (low complexity). Disordered stretches follow at residues 323–380 (ESSS…GGRV), 444–464 (KQQR…LQRS), 754–864 (EPLS…KTVT), and 943–1033 (MELV…PRIP). Residues 770–784 (AQSRSRSRSRSRSRS) are compositionally biased toward basic residues. Positions 785 to 797 (SRGQGKSPGRRSP) are enriched in low complexity. Residues 862–934 (TVTLSKMKQS…QRAVDTIRRA (73 aa)) form the PDZ 3 domain. Residues 991–1000 (PEPPTNPQTP) are compositionally biased toward pro residues.

In terms of assembly, homodimerizes (via PDZ2 domain). Component of USH2 complex, composed of ADGRV1, PDZD7, USH2A and WHRN. Interacts (via PDZ domains) with WHRN; the interaction is direct. Interacts with USH1G. Interacts with ADGRV1 (via the cytoplasmic region). Interacts with USH2A (via the cytoplasmic region). Interacts with MYO7A (via MyTH4-FERM domains). Weakly expressed in the inner ear. Expressed in the retinal pigment epithelium.

Its subcellular location is the cell projection. The protein resides in the cilium. It localises to the nucleus. It is found in the stereocilium. Functionally, in cochlear developing hair cells, essential in organizing the USH2 complex at stereocilia ankle links. Blocks inhibition of adenylate cyclase activity mediated by ADGRV1. In Homo sapiens (Human), this protein is PDZ domain-containing protein 7.